Consider the following 334-residue polypeptide: Dual specificity mitogen-activated protein kinase kinase 6 (334 aa).

The span at 1 to 11 (MSQSKGKKRNP) shows a compositional bias: basic residues. Residues 1–34 (MSQSKGKKRNPGLKIPKEAFEQPQTSSTPPRDLD) are disordered. A d domain region spans residues 4–19 (SKGKKRNPGLKIPKEA). The Protein kinase domain maps to 53–314 (LEPIMELGRG…YPELMQHPFF (262 aa)). ATP contacts are provided by residues 59–67 (LGRGAYGVV) and K82. D179 acts as the Proton acceptor in catalysis. S207 carries the (Microbial infection) O-acetylserine; by Yersinia YopJ; alternate modification. Residue S207 is modified to Phosphoserine; by MAP3K; alternate. At T211 the chain carries (Microbial infection) O-acetylthreonine; by Yersinia YopJ; alternate. T211 is modified (phosphothreonine; by MAP3K; alternate). A DVD domain region spans residues 311–334 (HPFFTLHESKGTDVASFVKLILGD).

The protein belongs to the protein kinase superfamily. STE Ser/Thr protein kinase family. MAP kinase kinase subfamily. In terms of assembly, dimer. Interacts (via its D domain) with its substrates MAPK11, MAPK12, MAPK13 and MAPK14. Interacts (via its DVD domain) with MAP3Ks activators like MAP3K5/ASK1, MAP3K1/MEKK1, MAP3K2/MEKK2, MAP3K3/MEKK3, MAP3K4/MEKK4, MAP3K7/TAK1, MAP3K11/MLK3 and MAP3K17/TAOK2. Interacts with DCTN1. Interacts with EIF2AK2/PKR. As to quaternary structure, (Microbial infection) Interacts with Yersinia YopJ. Weakly autophosphorylated. Phosphorylated at Ser-207 and Thr-211 by the majority of M3Ks, such as MAP3K5/ASK1, MAP3K1/MEKK1, MAP3K2/MEKK2, MAP3K3/MEKK3, MAP3K4/MEKK4, MAP3K7/TAK1, MAP3K11/MLK3 and MAP3K17/TAOK2. Post-translationally, in response to genotoxic stress, MAP3K-phosphorylated MAP2K6 is ubiquitinated and degraded by the SCF(FBXO31) complex. In terms of processing, (Microbial infection) Acetylation of Ser-207 and Thr-211 by Yersinia YopJ prevents phosphorylation and activation, thus blocking the MAPK signaling pathway. As to expression, isoform 2 is only expressed in skeletal muscle. Isoform 1 is expressed in skeletal muscle, heart, and in lesser extent in liver or pancreas.

It is found in the nucleus. It localises to the cytoplasm. Its subcellular location is the cytoskeleton. It catalyses the reaction L-seryl-[protein] + ATP = O-phospho-L-seryl-[protein] + ADP + H(+). It carries out the reaction L-threonyl-[protein] + ATP = O-phospho-L-threonyl-[protein] + ADP + H(+). The enzyme catalyses L-tyrosyl-[protein] + ATP = O-phospho-L-tyrosyl-[protein] + ADP + H(+). Its activity is regulated as follows. Activated by dual phosphorylation on Ser-207 and Thr-211 in response to a variety of cellular stresses, including UV radiation, osmotic shock, hypoxia, inflammatory cytokines, interferon gamma (IFNG), and less often by growth factors. MAP2K6/MKK6 is activated by the majority of M3Ks, such as MAP3K5/ASK1, MAP3K1/MEKK1, MAP3K2/MEKK2, MAP3K3/MEKK3, MAP3K4/MEKK4, MAP3K7/TAK1, MAP3K11/MLK3 and MAP3K17/TAOK2. Its function is as follows. Dual specificity protein kinase which acts as an essential component of the MAP kinase signal transduction pathway. With MAP3K3/MKK3, catalyzes the concomitant phosphorylation of a threonine and a tyrosine residue in the MAP kinases p38 MAPK11, MAPK12, MAPK13 and MAPK14 and plays an important role in the regulation of cellular responses to cytokines and all kinds of stresses. Especially, MAP2K3/MKK3 and MAP2K6/MKK6 are both essential for the activation of MAPK11 and MAPK13 induced by environmental stress, whereas MAP2K6/MKK6 is the major MAPK11 activator in response to TNF. MAP2K6/MKK6 also phosphorylates and activates PAK6. The p38 MAP kinase signal transduction pathway leads to direct activation of transcription factors. Nuclear targets of p38 MAP kinase include the transcription factors ATF2 and ELK1. Within the p38 MAPK signal transduction pathway, MAP3K6/MKK6 mediates phosphorylation of STAT4 through MAPK14 activation, and is therefore required for STAT4 activation and STAT4-regulated gene expression in response to IL-12 stimulation. The pathway is also crucial for IL-6-induced SOCS3 expression and down-regulation of IL-6-mediated gene induction; and for IFNG-dependent gene transcription. Has a role in osteoclast differentiation through NF-kappa-B transactivation by TNFSF11, and in endochondral ossification and since SOX9 is another likely downstream target of the p38 MAPK pathway. MAP2K6/MKK6 mediates apoptotic cell death in thymocytes. Acts also as a regulator for melanocytes dendricity, through the modulation of Rho family GTPases. This chain is Dual specificity mitogen-activated protein kinase kinase 6 (MAP2K6), found in Homo sapiens (Human).